A 428-amino-acid chain; its full sequence is Aerobic C4-dicarboxylate transport protein (428 aa).

9 helical membrane passes run 5-27 (LFKS…GHYY), 47-64 (MIIA…IAGM), 77-99 (ALLY…VNVV), 141-163 (VIGA…FGFA), 184-206 (VIFG…AMAF), 216-238 (LVQL…VVVL), 289-311 (VVGL…YLTM), 326-348 (IFHQ…GVTG), and 353-375 (VLAA…ILGI).

This sequence belongs to the dicarboxylate/amino acid:cation symporter (DAACS) (TC 2.A.23) family.

Its subcellular location is the cell inner membrane. Its function is as follows. Responsible for the transport of dicarboxylates such as succinate, fumarate, and malate from the periplasm across the membrane. The polypeptide is Aerobic C4-dicarboxylate transport protein (Salmonella typhi).